The chain runs to 508 residues: 4-trimethylaminobutyraldehyde dehydrogenase A (508 aa).

NAD(+) contacts are provided by residues Lys194 and 246-250 (GSVPT). The Proton acceptor role is filled by Glu268. Cys302 serves as the catalytic Nucleophile. Position 405 (Glu405) interacts with NAD(+).

Belongs to the aldehyde dehydrogenase family. Homotetramer.

The protein resides in the cytoplasm. Its subcellular location is the cytosol. It carries out the reaction 4-(trimethylamino)butanal + NAD(+) + H2O = 4-(trimethylamino)butanoate + NADH + 2 H(+). It catalyses the reaction an aldehyde + NAD(+) + H2O = a carboxylate + NADH + 2 H(+). It functions in the pathway amine and polyamine biosynthesis; carnitine biosynthesis. Its function is as follows. Converts gamma-trimethylaminobutyraldehyde into gamma-butyrobetaine with high efficiency (in vitro). Can catalyze the irreversible oxidation of a broad range of aldehydes to the corresponding acids in an NAD-dependent reaction, but with low efficiency. This chain is 4-trimethylaminobutyraldehyde dehydrogenase A (aldh9a1a), found in Danio rerio (Zebrafish).